The following is a 396-amino-acid chain: Stearoyl-[acyl-carrier-protein] 9-desaturase, chloroplastic (396 aa).

Residues 1–33 constitute a chloroplast transit peptide; that stretch reads MALRITPVTLQSERYRSFSFPKKANLRSPKFAM. Ala34 is subject to Blocked amino end (Ala); partial. Residues Glu138, Glu176, His179, Glu229, Glu262, and His265 each coordinate Fe cation.

The protein belongs to the fatty acid desaturase type 2 family. In terms of assembly, homodimer. Fe(2+) is required as a cofactor. Post-translationally, most of the N-terminus is blocked.

The protein resides in the plastid. The protein localises to the chloroplast. The enzyme catalyses octadecanoyl-[ACP] + 2 reduced [2Fe-2S]-[ferredoxin] + O2 + 2 H(+) = (9Z)-octadecenoyl-[ACP] + 2 oxidized [2Fe-2S]-[ferredoxin] + 2 H2O. It participates in lipid metabolism; fatty acid metabolism. In terms of biological role, converts stearoyl-ACP to oleoyl-ACP by introduction of a cis double bond between carbons 9 and 10 of the acyl chain. This chain is Stearoyl-[acyl-carrier-protein] 9-desaturase, chloroplastic, found in Carthamus tinctorius (Safflower).